Reading from the N-terminus, the 451-residue chain is Crh-like protein 2 (451 aa).

A signal peptide spans 1–21 (MQFNSLVLLAGATILSPFVQA). Residues 22 to 241 (QTWTTCNPLN…FTKVPFTMYV (220 aa)) enclose the GH16 domain. Cys27 and Cys34 are disulfide-bonded. Asn31, Asn43, Asn49, and Asn59 each carry an N-linked (GlcNAc...) asparagine glycan. Glu121 (nucleophile) is an active-site residue. Residue Glu125 is the Proton donor of the active site. Residue Glu125 coordinates chitin. Residues Asn130, Asn143, and Asn165 are each glycosylated (N-linked (GlcNAc...) asparagine). Chitin is bound by residues Arg206, Trp210, and Thr222. Asn273 carries an N-linked (GlcNAc...) asparagine glycan. Residues 305–325 (VYCGGGAAVAALVSAFLFTFL) traverse the membrane as a helical segment. An N-linked (GlcNAc...) asparagine glycan is attached at Asn366.

Belongs to the glycosyl hydrolase 16 family. CRH1 subfamily. Forms homodimers as well as heterodimers with other crh protein members crh1 and crh3. Dimerization may be necessary for the transglycosylation activity.

Its subcellular location is the membrane. The catalysed reaction is Random endo-hydrolysis of N-acetyl-beta-D-glucosaminide (1-&gt;4)-beta-linkages in chitin and chitodextrins.. In terms of biological role, dual chitinase/transglycosylase that plays a role in cell wall architecture. Chitinase and transglycosylase activities are coupled. Required for the polysaccharide cross-linking at the septa and the cell wall. More specifically, transfers chitin to 1,6-beta-glucan in the cell wall. This is Crh-like protein 2 from Botryotinia fuckeliana (strain B05.10) (Noble rot fungus).